The primary structure comprises 102 residues: uncharacterized protein (102 aa).

A disordered region spans residues 1-43 (MNNAHEENISSVTGFKSTSGSPAIGSSLPGRSGEGRSSSSSSG). Positions 9–21 (ISSVTGFKSTSGS) are enriched in polar residues. Positions 25 to 43 (GSSLPGRSGEGRSSSSSSG) are enriched in low complexity.

This is an uncharacterized protein from Saccharomyces cerevisiae (strain ATCC 204508 / S288c) (Baker's yeast).